A 645-amino-acid polypeptide reads, in one-letter code: ATP-dependent zinc metalloprotease FtsH 3 (645 aa).

Residues 1 to 11 (MQNKRNQSRVL) are Cytoplasmic-facing. A helical membrane pass occupies residues 12–32 (WLLLIYITIGIFIYVGVNSLI). The Periplasmic segment spans residues 33-110 (GTPDVSKIEY…YVRSLENSWW (78 aa)). A helical transmembrane segment spans residues 111-131 (ISILTFLLPVFLLIFLFTFLF). Topologically, residues 132–645 (RSSGGGANQG…ENNLIERKGI (514 aa)) are cytoplasmic. 202-209 (GEPGTGKT) lines the ATP pocket. Position 424 (His-424) interacts with Zn(2+). The active site involves Glu-425. Zn(2+) is bound by residues His-428 and Asp-501.

In the central section; belongs to the AAA ATPase family. It in the C-terminal section; belongs to the peptidase M41 family. In terms of assembly, homohexamer. It depends on Zn(2+) as a cofactor.

The protein localises to the cell inner membrane. Its function is as follows. Acts as a processive, ATP-dependent zinc metallopeptidase for both cytoplasmic and membrane proteins. Plays a role in the quality control of integral membrane proteins. The polypeptide is ATP-dependent zinc metalloprotease FtsH 3 (Petrotoga mobilis (strain DSM 10674 / SJ95)).